Reading from the N-terminus, the 911-residue chain is Alpha-actinin-4 (911 aa).

The tract at residues 1–30 (MVDYHAASQSYQYGPSSAGNGAGGGGSMGD) is disordered. The tract at residues 1-269 (MVDYHAASQS…YVSSFYHAFS (269 aa)) is actin-binding. Positions 12-26 (QYGPSSAGNGAGGGG) are interaction with VCL. Y31 is subject to Phosphotyrosine. The segment at 40 to 61 (RDLLLDPAWEKQQRKTFTAWCN) is interaction with VCL. 2 Calponin-homology (CH) domains span residues 50 to 154 (KQQR…LRFA) and 163 to 269 (TSAK…HAFS). An LXXLL motif motif is present at residues 84–88 (LMLLL). Residues 108-126 (KINNVNKALDFIASKGVKL) are interaction with VCL. K114 carries the post-translational modification N6-acetyllysine. Residues 177-192 (TAPYKNVNVQNFHISW) are polyphosphoinositide (PIP2)-binding. Residue K214 is modified to N6-acetyllysine. Phosphothreonine is present on T249. Spectrin repeat units lie at residues 293 to 403 (HLME…WLLN), 413 to 518 (HLAE…ALEK), 528 to 639 (QLHL…ALLE), and 649 to 752 (HLRR…EVEN). An N6-acetyllysine mark is found at K592 and K625. S696 is modified (phosphoserine). The interval 736–911 (WEQLLTTIAR…STALYGESDL (176 aa)) is mediates interaction with MICALL2. 2 consecutive EF-hand domains span residues 765–800 (EQMQ…LGYD) and 806–841 (QGEA…ETTD). Position 778 (D778) interacts with Ca(2+). The residue at position 779 (K779) is an N6-acetyllysine. Residues D780 and E789 each contribute to the Ca(2+) site. N6-acetyllysine is present on K859. The residue at position 909 (S909) is a Phosphoserine.

Belongs to the alpha-actinin family. As to quaternary structure, homodimer; antiparallel. Identified in a IGF2BP1-dependent mRNP granule complex containing untranslated mRNAs. Component of the CART complex, at least composed of ACTN4, HGS/HRS, MYO5B and TRIM3. Binds TRIM3 at the N-terminus. Interacts with MAGI1. Interacts with PDLIM2. Identified in a complex with CASK, IQGAP1, MAGI2, NPHS1, SPTAN1 and SPTBN1. Interacts with MICALL2 (preferentially in opened conformation); stimulated by RAB13 activation. Interacts with PPARG and RARA. Binds to VCL; this interaction triggers VCL conformational changes. Interacts with SEPTIN14. Interacts with IGSF8.

The protein localises to the nucleus. Its subcellular location is the cytoplasm. It localises to the cell junction. It is found in the cytoskeleton. The protein resides in the stress fiber. The protein localises to the perinuclear region. F-actin cross-linking protein which is thought to anchor actin to a variety of intracellular structures. This is a bundling protein. Probably involved in vesicular trafficking via its association with the CART complex. The CART complex is necessary for efficient transferrin receptor recycling but not for EGFR degradation. Involved in tight junction assembly in epithelial cells probably through interaction with MICALL2. Links MICALL2 to the actin cytoskeleton and recruits it to the tight junctions. May also function as a transcriptional coactivator, stimulating transcription mediated by the nuclear hormone receptors PPARG and RARA. Association with IGSF8 regulates the immune synapse formation and is required for efficient T-cell activation. This is Alpha-actinin-4 from Pongo abelii (Sumatran orangutan).